A 506-amino-acid chain; its full sequence is Maturase K (506 aa).

The protein belongs to the intron maturase 2 family. MatK subfamily.

It localises to the plastid. Its subcellular location is the chloroplast. Its function is as follows. Usually encoded in the trnK tRNA gene intron. Probably assists in splicing its own and other chloroplast group II introns. This Styphnolobium japonicum (Japanese pagoda tree) protein is Maturase K.